We begin with the raw amino-acid sequence, 691 residues long: Protein phosphatase Slingshot homolog (691 aa).

In terms of domain architecture, DEK-C spans 236 to 291 (EETERIIKLKLRDILRESDLENITSKEVRSALEQHTLCALQDYKEFIDNEMIIILA). Residues 295 to 436 (RPSEIFPYLY…LQTYQGILGA (142 aa)) form the Tyrosine-protein phosphatase domain. The active-site Phosphocysteine intermediate is C380. The stretch at 532 to 580 (NEHVLSKEQIIQEEKKVMELEKGPEWVVKNNVLEEMKETEERELPNFEL) forms a coiled coil. Residues 585 to 620 (NQSRERDQETIKESSVITQGSSSLDEVFESSTPTRS) form a disordered region. Positions 587 to 596 (SRERDQETIK) are enriched in basic and acidic residues. The span at 597 to 619 (ESSVITQGSSSLDEVFESSTPTR) shows a compositional bias: polar residues.

Belongs to the protein-tyrosine phosphatase family. As to quaternary structure, interacts with actin and this stimulates phosphatase activity.

It is found in the cytoplasm. Its subcellular location is the cytoskeleton. The protein localises to the cleavage furrow. The protein resides in the midbody. It catalyses the reaction O-phospho-L-tyrosyl-[protein] + H2O = L-tyrosyl-[protein] + phosphate. It carries out the reaction O-phospho-L-seryl-[protein] + H2O = L-seryl-[protein] + phosphate. The enzyme catalyses O-phospho-L-threonyl-[protein] + H2O = L-threonyl-[protein] + phosphate. Functionally, protein phosphatase which regulates actin filament dynamics. Dephosphorylates and activates the actin binding/depolymerizing factor cofilin, which subsequently binds to actin filaments and stimulates their disassembly. Required for completion of the gastrulation movement and for cytokinesis. This Xenopus laevis (African clawed frog) protein is Protein phosphatase Slingshot homolog (ssh).